A 75-amino-acid chain; its full sequence is MASEVLVKPQMRGLLARRLRIHMVGAFLVSLGVAALYKFGVAEPRKKAYADFYKNYSAEKDFEEMKKAGLFRSIK.

The Mitochondrial matrix segment spans residues 1–13 (MASEVLVKPQMRG). The chain crosses the membrane as a helical span at residues 14-54 (LLARRLRIHMVGAFLVSLGVAALYKFGVAEPRKKAYADFYK). At 55–75 (NYSAEKDFEEMKKAGLFRSIK) the chain is on the mitochondrial intermembrane side.

This sequence belongs to the cytochrome c oxidase subunit 6c family. In terms of assembly, component of the cytochrome c oxidase (complex IV, CIV), a multisubunit enzyme composed of 14 subunits. The complex is composed of a catalytic core of 3 subunits MT-CO1, MT-CO2 and MT-CO3, encoded in the mitochondrial DNA, and 11 supernumerary subunits COX4I, COX5A, COX5B, COX6A, COX6B, COX6C, COX7A, COX7B, COX7C, COX8 and NDUFA4, which are encoded in the nuclear genome. The complex exists as a monomer or a dimer and forms supercomplexes (SCs) in the inner mitochondrial membrane with NADH-ubiquinone oxidoreductase (complex I, CI) and ubiquinol-cytochrome c oxidoreductase (cytochrome b-c1 complex, complex III, CIII), resulting in different assemblies (supercomplex SCI(1)III(2)IV(1) and megacomplex MCI(2)III(2)IV(2)).

The protein resides in the mitochondrion inner membrane. The protein operates within energy metabolism; oxidative phosphorylation. Component of the cytochrome c oxidase, the last enzyme in the mitochondrial electron transport chain which drives oxidative phosphorylation. The respiratory chain contains 3 multisubunit complexes succinate dehydrogenase (complex II, CII), ubiquinol-cytochrome c oxidoreductase (cytochrome b-c1 complex, complex III, CIII) and cytochrome c oxidase (complex IV, CIV), that cooperate to transfer electrons derived from NADH and succinate to molecular oxygen, creating an electrochemical gradient over the inner membrane that drives transmembrane transport and the ATP synthase. Cytochrome c oxidase is the component of the respiratory chain that catalyzes the reduction of oxygen to water. Electrons originating from reduced cytochrome c in the intermembrane space (IMS) are transferred via the dinuclear copper A center (CU(A)) of subunit 2 and heme A of subunit 1 to the active site in subunit 1, a binuclear center (BNC) formed by heme A3 and copper B (CU(B)). The BNC reduces molecular oxygen to 2 water molecules using 4 electrons from cytochrome c in the IMS and 4 protons from the mitochondrial matrix. This Plecturocebus donacophilus (Bolivian gray titi monkey) protein is Cytochrome c oxidase subunit 6C (COX6C).